A 168-amino-acid polypeptide reads, in one-letter code: Ubiquitin-conjugating enzyme E2 2 (168 aa).

The UBC core domain maps to 4-150 (PAKRRLMRDF…VRETVENSWN (147 aa)). The active-site Glycyl thioester intermediate is the C88. The segment at 143–168 (ETVENSWNEDDEDEDEDEDEDIDDAE) is disordered. The span at 149 to 168 (WNEDDEDEDEDEDEDIDDAE) shows a compositional bias: acidic residues.

The protein belongs to the ubiquitin-conjugating enzyme family.

Its subcellular location is the cytoplasm. It localises to the nucleus. It carries out the reaction S-ubiquitinyl-[E1 ubiquitin-activating enzyme]-L-cysteine + [E2 ubiquitin-conjugating enzyme]-L-cysteine = [E1 ubiquitin-activating enzyme]-L-cysteine + S-ubiquitinyl-[E2 ubiquitin-conjugating enzyme]-L-cysteine.. Its pathway is protein modification; protein ubiquitination. Catalyzes the covalent attachment of ubiquitin to other proteins. Plays a role in transcription regulation by catalyzing the monoubiquitination of histone H2B to form H2BK123ub1. H2BK123ub1 gives a specific tag for epigenetic transcriptional activation and is also a prerequisite for H3K4me and H3K79me formation. Also involved in postreplication repair of UV-damaged DNA, in N-end rule-dependent protein degradation and in sporulation. This is Ubiquitin-conjugating enzyme E2 2 (UBC2) from Debaryomyces hansenii (strain ATCC 36239 / CBS 767 / BCRC 21394 / JCM 1990 / NBRC 0083 / IGC 2968) (Yeast).